Reading from the N-terminus, the 251-residue chain is Imidazole glycerol phosphate synthase subunit HisF (251 aa).

Active-site residues include Asp-11 and Asp-130.

This sequence belongs to the HisA/HisF family. As to quaternary structure, heterodimer of HisH and HisF.

It localises to the cytoplasm. The enzyme catalyses 5-[(5-phospho-1-deoxy-D-ribulos-1-ylimino)methylamino]-1-(5-phospho-beta-D-ribosyl)imidazole-4-carboxamide + L-glutamine = D-erythro-1-(imidazol-4-yl)glycerol 3-phosphate + 5-amino-1-(5-phospho-beta-D-ribosyl)imidazole-4-carboxamide + L-glutamate + H(+). It participates in amino-acid biosynthesis; L-histidine biosynthesis; L-histidine from 5-phospho-alpha-D-ribose 1-diphosphate: step 5/9. Its function is as follows. IGPS catalyzes the conversion of PRFAR and glutamine to IGP, AICAR and glutamate. The HisF subunit catalyzes the cyclization activity that produces IGP and AICAR from PRFAR using the ammonia provided by the HisH subunit. The polypeptide is Imidazole glycerol phosphate synthase subunit HisF (Prosthecochloris aestuarii (strain DSM 271 / SK 413)).